A 261-amino-acid polypeptide reads, in one-letter code: tRNA pseudouridine synthase A (261 aa).

The active-site Nucleophile is the Asp-51. Residue Tyr-109 participates in substrate binding.

The protein belongs to the tRNA pseudouridine synthase TruA family. In terms of assembly, homodimer.

It catalyses the reaction uridine(38/39/40) in tRNA = pseudouridine(38/39/40) in tRNA. Formation of pseudouridine at positions 38, 39 and 40 in the anticodon stem and loop of transfer RNAs. This Haemophilus ducreyi (strain 35000HP / ATCC 700724) protein is tRNA pseudouridine synthase A.